The chain runs to 338 residues: Glyceraldehyde-3-phosphate dehydrogenase 2 (338 aa).

NAD(+)-binding positions include 13-14 (TI) and Gly-111. A D-glyceraldehyde 3-phosphate-binding site is contributed by 140 to 142 (SCN). The Nucleophile role is filled by Cys-141. Arg-169 is a binding site for NAD(+). Position 195–196 (195–196 (HG)) interacts with D-glyceraldehyde 3-phosphate. Gln-300 is a binding site for NAD(+).

Belongs to the glyceraldehyde-3-phosphate dehydrogenase family. In terms of assembly, homotetramer.

It is found in the cytoplasm. It catalyses the reaction D-glyceraldehyde 3-phosphate + phosphate + NADP(+) = (2R)-3-phospho-glyceroyl phosphate + NADPH + H(+). It carries out the reaction D-glyceraldehyde 3-phosphate + phosphate + NAD(+) = (2R)-3-phospho-glyceroyl phosphate + NADH + H(+). The protein operates within carbohydrate degradation; glycolysis; pyruvate from D-glyceraldehyde 3-phosphate: step 1/5. The sequence is that of Glyceraldehyde-3-phosphate dehydrogenase 2 from Methanosarcina barkeri (strain Fusaro / DSM 804).